A 586-amino-acid chain; its full sequence is Isocitrate dehydrogenase kinase/phosphatase (586 aa).

Residues 316–322 (ARGDRGL) and K337 contribute to the ATP site. D372 is a catalytic residue.

Belongs to the AceK family.

The protein resides in the cytoplasm. It catalyses the reaction L-seryl-[isocitrate dehydrogenase] + ATP = O-phospho-L-seryl-[isocitrate dehydrogenase] + ADP + H(+). Functionally, bifunctional enzyme which can phosphorylate or dephosphorylate isocitrate dehydrogenase (IDH) on a specific serine residue. This is a regulatory mechanism which enables bacteria to bypass the Krebs cycle via the glyoxylate shunt in response to the source of carbon. When bacteria are grown on glucose, IDH is fully active and unphosphorylated, but when grown on acetate or ethanol, the activity of IDH declines drastically concomitant with its phosphorylation. In Anaeromyxobacter dehalogenans (strain 2CP-C), this protein is Isocitrate dehydrogenase kinase/phosphatase.